The following is a 928-amino-acid chain: Periplasmic nitrate reductase (928 aa).

Residues 1–33 (MAFSRREFLKSAAAASAASAVGMSVPSQLLAQA) constitute a signal peptide (tat-type signal). Residues 40–96 (WRWDKSVCRFCGTGCGIMVATKNDQIVAVKGDPAAPVNRGLNCIKGYFNAKIMYGAD) form the 4Fe-4S Mo/W bis-MGD-type domain. [4Fe-4S] cluster-binding residues include C47, C50, C54, and C82. Mo-bis(molybdopterin guanine dinucleotide) is bound by residues K84, Q152, N177, C181, 214–221 (WGANMAEM), 265–267 (QTD), M422, Q426, N532, 557–558 (SD), K580, D607, and 818–827 (TGRVLEHWHS). A substrate-binding site is contributed by W894. 2 residues coordinate Mo-bis(molybdopterin guanine dinucleotide): N902 and K919.

It belongs to the prokaryotic molybdopterin-containing oxidoreductase family. NasA/NapA/NarB subfamily. In terms of assembly, component of the periplasmic nitrate reductase NapAB complex composed of NapA and NapB. It depends on [4Fe-4S] cluster as a cofactor. The cofactor is Mo-bis(molybdopterin guanine dinucleotide). In terms of processing, predicted to be exported by the Tat system. The position of the signal peptide cleavage has not been experimentally proven.

The protein localises to the periplasm. It carries out the reaction 2 Fe(II)-[cytochrome] + nitrate + 2 H(+) = 2 Fe(III)-[cytochrome] + nitrite + H2O. In terms of biological role, catalytic subunit of the periplasmic nitrate reductase complex NapAB. Receives electrons from NapB and catalyzes the reduction of nitrate to nitrite. This is Periplasmic nitrate reductase from Wolinella succinogenes (strain ATCC 29543 / DSM 1740 / CCUG 13145 / JCM 31913 / LMG 7466 / NCTC 11488 / FDC 602W) (Vibrio succinogenes).